Consider the following 1061-residue polypeptide: Carbamoyl phosphate synthase large chain (1061 aa).

A carboxyphosphate synthetic domain region spans residues 1 to 401 (MPKRTDVHKI…ALQKAVRSLE (401 aa)). Residues arginine 129, arginine 169, glycine 175, glycine 176, lysine 208, isoleucine 210, glutamate 215, glycine 241, isoleucine 242, histidine 243, glutamine 284, and glutamate 298 each contribute to the ATP site. Positions 133–327 (KDLMQELNEP…IAKLAAKIAV (195 aa)) constitute an ATP-grasp 1 domain. Residues glutamine 284, glutamate 298, and asparagine 300 each contribute to the Mg(2+) site. Residues glutamine 284, glutamate 298, and asparagine 300 each coordinate Mn(2+). The oligomerization domain stretch occupies residues 402 to 546 (IDEKDLISAK…YSSYDLENES (145 aa)). The interval 547-929 (KKSDKKSVLV…ALYKAFTGAK (383 aa)) is carbamoyl phosphate synthetic domain. Residues 671–861 (DQTIKNLGLK…MAQVATRVIL (191 aa)) enclose the ATP-grasp 2 domain. ATP is bound by residues arginine 707, alanine 746, leucine 748, glutamate 752, glycine 777, valine 778, histidine 779, serine 780, glutamine 820, and glutamate 832. Glutamine 820, glutamate 832, and asparagine 834 together coordinate Mg(2+). Mn(2+) contacts are provided by glutamine 820, glutamate 832, and asparagine 834. Positions 930–1061 (MELPDNGNVL…ENRSFATNSL (132 aa)) constitute an MGS-like domain. Positions 930–1061 (MELPDNGNVL…ENRSFATNSL (132 aa)) are allosteric domain.

Belongs to the CarB family. In terms of assembly, composed of two chains; the small (or glutamine) chain promotes the hydrolysis of glutamine to ammonia, which is used by the large (or ammonia) chain to synthesize carbamoyl phosphate. Tetramer of heterodimers (alpha,beta)4. Mg(2+) serves as cofactor. Mn(2+) is required as a cofactor.

It catalyses the reaction hydrogencarbonate + L-glutamine + 2 ATP + H2O = carbamoyl phosphate + L-glutamate + 2 ADP + phosphate + 2 H(+). The enzyme catalyses hydrogencarbonate + NH4(+) + 2 ATP = carbamoyl phosphate + 2 ADP + phosphate + 2 H(+). It participates in amino-acid biosynthesis; L-arginine biosynthesis; carbamoyl phosphate from bicarbonate: step 1/1. The protein operates within pyrimidine metabolism; UMP biosynthesis via de novo pathway; (S)-dihydroorotate from bicarbonate: step 1/3. In terms of biological role, large subunit of the glutamine-dependent carbamoyl phosphate synthetase (CPSase). CPSase catalyzes the formation of carbamoyl phosphate from the ammonia moiety of glutamine, carbonate, and phosphate donated by ATP, constituting the first step of 2 biosynthetic pathways, one leading to arginine and/or urea and the other to pyrimidine nucleotides. The large subunit (synthetase) binds the substrates ammonia (free or transferred from glutamine from the small subunit), hydrogencarbonate and ATP and carries out an ATP-coupled ligase reaction, activating hydrogencarbonate by forming carboxy phosphate which reacts with ammonia to form carbamoyl phosphate. This is Carbamoyl phosphate synthase large chain from Ligilactobacillus salivarius (strain UCC118) (Lactobacillus salivarius).